The primary structure comprises 206 residues: Large ribosomal subunit protein uL4 (206 aa).

Residues 47–94 (NRAQKGRAEVSKSTRKPWRQKGTGRARAGMASSPLWRGGGRVFPNSPE) form a disordered region. The segment covering 59-70 (STRKPWRQKGTG) has biased composition (basic residues).

It belongs to the universal ribosomal protein uL4 family. Part of the 50S ribosomal subunit.

In terms of biological role, one of the primary rRNA binding proteins, this protein initially binds near the 5'-end of the 23S rRNA. It is important during the early stages of 50S assembly. It makes multiple contacts with different domains of the 23S rRNA in the assembled 50S subunit and ribosome. Functionally, forms part of the polypeptide exit tunnel. This is Large ribosomal subunit protein uL4 from Aromatoleum aromaticum (strain DSM 19018 / LMG 30748 / EbN1) (Azoarcus sp. (strain EbN1)).